The following is a 707-amino-acid chain: MESGTVLLESKSSPLNLLHEMHELRLLGHLCDVTVIVDYQGVREDFMAHKAVLAATSKFFKEVFLNEKRADGTRTNVYLSEVQVVDFASFLEFVYTARVRVKEDRVQQMLEVAEKLKCLDLSETCLQLKKQMLESVLLELQNFSESQEVEASSGPQVSVTPSSKASVPAGEDAHSNGLVDSSDYPIERLGNGLSPETPSKKCKEKLDKKKDVAKPPFPKIRRASGRLAGKKVFVEIPKKKYTRRLREQQKSAEEAAKNDKCPQDQSPDNERVEAEPASKSEACPASVEREESLQKVEGEKEEEEGKDGEEKKKSNFQCTVCDKAFLYEKSFLKHIKYHHGVATEVVYRCDTCGQTFANRCNLKSHQRHVHSSERHFPCEMCAKKFKRKKDVKRHVLQVHEGGGERHRCGQCGKGLSSKTALRLHERTHTGDKPYGCTKCDAKFSQPSALKTHLRVHTGERPFVCDECGARFTQNHMLIYHKRCHTGERPFMCETCGKSFASKEYLKHHNRIHTGSKPFKCEVCLRTFAQRNSLYQHIKVHTGERPYCCDQCGKQFTQVNALQRHHRIHTGEKPYMCNACGRTFTDKSTLRRHTSIHDKNTPWKSFLVIVDGSPKNDEGQKTEQPDEEYASPKLSDRLLSFGENSHFNNLLEVQGNVPAVQENSSTDTACKAVVSQDALLTTSISALGELTPQTVSMPAHLPSLTNME.

The BTB domain maps to 31–103; the sequence is CDVTVIVDYQ…VYTARVRVKE (73 aa). Over residues 149 to 165 the composition is skewed to polar residues; that stretch reads VEASSGPQVSVTPSSKA. Disordered regions lie at residues 149–221 and 243–309; these read VEAS…PKIR and RRLR…KDGE. Composition is skewed to basic and acidic residues over residues 198-213, 243-278, and 287-298; these read PSKK…KDVA, RRLR…EPAS, and VEREESLQKVEG. 10 C2H2-type zinc fingers span residues 316 to 338, 347 to 370, 376 to 399, 406 to 428, 434 to 456, 462 to 484, 490 to 512, 518 to 540, 546 to 568, and 574 to 596; these read FQCT…IKYH, YRCD…RHVH, FPCE…LQVH, HRCG…ERTH, YGCT…LRVH, FVCD…KRCH, FMCE…NRIH, FKCE…IKVH, YCCD…HRIH, and YMCN…TSIH. A Phosphoserine modification is found at Ser612.

The protein belongs to the krueppel C2H2-type zinc-finger protein family. In terms of assembly, interacts with NCL.

The protein resides in the cytoplasm. It is found in the nucleus. Its subcellular location is the nucleoplasm. The protein localises to the nucleolus. In terms of biological role, transcriptional repressor that binds the GZF1 responsive element (GRE) (consensus: 5'-TGCGCN[TG][CA]TATA-3'). May be regulating VSX2/HOX10 expression. The protein is GDNF-inducible zinc finger protein 1 (Gzf1) of Rattus norvegicus (Rat).